Consider the following 227-residue polypeptide: Enolase-phosphatase E1 (227 aa).

The protein belongs to the HAD-like hydrolase superfamily. MasA/MtnC family. Monomer. The cofactor is Mg(2+).

The catalysed reaction is 5-methylsulfanyl-2,3-dioxopentyl phosphate + H2O = 1,2-dihydroxy-5-(methylsulfanyl)pent-1-en-3-one + phosphate. It participates in amino-acid biosynthesis; L-methionine biosynthesis via salvage pathway; L-methionine from S-methyl-5-thio-alpha-D-ribose 1-phosphate: step 3/6. Its pathway is amino-acid biosynthesis; L-methionine biosynthesis via salvage pathway; L-methionine from S-methyl-5-thio-alpha-D-ribose 1-phosphate: step 4/6. Functionally, bifunctional enzyme that catalyzes the enolization of 2,3-diketo-5-methylthiopentyl-1-phosphate (DK-MTP-1-P) into the intermediate 2-hydroxy-3-keto-5-methylthiopentenyl-1-phosphate (HK-MTPenyl-1-P), which is then dephosphorylated to form the acireductone 1,2-dihydroxy-3-keto-5-methylthiopentene (DHK-MTPene). This is Enolase-phosphatase E1 from Methylococcus capsulatus (strain ATCC 33009 / NCIMB 11132 / Bath).